A 313-amino-acid chain; its full sequence is Testis-expressed protein 264 (313 aa).

Residues 1–6 (MSDLLL) lie on the Lumenal side of the membrane. Residues 7–31 (LGLIGGLTLLLLLTLLAFAGYSGLL) form a helical; Signal-anchor for type III membrane protein membrane-spanning segment. Topologically, residues 32–313 (AGVEVSAGSP…EPTAPEKGKE (282 aa)) are cytoplasmic. A disordered region spans residues 193–313 (PEMKETEWKW…EPTAPEKGKE (121 aa)). A compositionally biased stretch (polar residues) spans 219–247 (DTMSDTSSVSLEVSPGSRETSAATLSPGA). A phosphoserine mark is found at serine 239 and serine 244. Basic and acidic residues predominate over residues 251-263 (GWDDGDTRSEHSY). Over residues 264–273 (SESGASGSSF) the composition is skewed to low complexity. Residues 273-276 (FEEL) carry the LIR motif motif.

In terms of assembly, interacts (via the LIR motif) with ATG8 family proteins MAP1LC3A, MAP1LC3B, GABARAP and GABARAPL1. Interacts with VCP/p97; bridging VCP/p97 to covalent DNA-protein cross-links (DPCs). Interacts with TOP1 (when sumoylated).

The protein localises to the endoplasmic reticulum membrane. It localises to the cytoplasmic vesicle. It is found in the autophagosome. Its subcellular location is the cytoplasm. The protein resides in the cytosol. The protein localises to the nucleus. It localises to the chromosome. Major reticulophagy (also called ER-phagy) receptor that acts independently of other candidate reticulophagy receptors to remodel subdomains of the endoplasmic reticulum into autophagosomes upon nutrient stress, which then fuse with lysosomes for endoplasmic reticulum turnover. The ATG8-containing isolation membrane (IM) cradles a tubular segment of TEX264-positive ER near a three-way junction, allowing the formation of a synapse of 2 juxtaposed membranes with trans interaction between the TEX264 and ATG8 proteins. Expansion of the IM would extend the capture of ER, possibly through a 'zipper-like' process involving continued trans TEX264-ATG8 interactions, until poorly understood mechanisms lead to the fission of relevant membranes and, ultimately, autophagosomal membrane closure. Also involved in the repair of covalent DNA-protein cross-links (DPCs) during DNA synthesis: acts by bridging VCP/p97 to covalent DNA-protein cross-links (DPCs) and initiating resolution of DPCs by SPRTN. This chain is Testis-expressed protein 264, found in Homo sapiens (Human).